The sequence spans 75 residues: Large ribosomal subunit protein bL31 (75 aa).

C16, C18, C37, and C40 together coordinate Zn(2+).

It belongs to the bacterial ribosomal protein bL31 family. Type A subfamily. As to quaternary structure, part of the 50S ribosomal subunit. The cofactor is Zn(2+).

Its function is as follows. Binds the 23S rRNA. The chain is Large ribosomal subunit protein bL31 from Pseudomonas syringae pv. tomato (strain ATCC BAA-871 / DC3000).